A 276-amino-acid chain; its full sequence is Omega-amidase NIT2 (276 aa).

One can recognise a CN hydrolase domain in the interval 4–248; that stretch reads FRLALIQLQI…EAIVYSDIDL (245 aa). Ser-26 bears the Phosphoserine mark. Glu-43 (proton acceptor) is an active-site residue. The residue at position 68 (Lys-68) is an N6-acetyllysine; alternate. The residue at position 68 (Lys-68) is an N6-succinyllysine; alternate. Residue Lys-112 is the Proton donor of the active site. N6-succinyllysine is present on residues Lys-123 and Lys-130. Residue Cys-153 is the Nucleophile of the active site.

In terms of assembly, homodimer. In terms of tissue distribution, detected in fetal brain (at protein level). Ubiquitous. Detected in heart, brain, placenta, lung, liver, skeletal muscle, kidney, pancreas, prostate, spleen, thymus, prostate, testis, ovary, small intestine and colon.

It localises to the cytoplasm. It carries out the reaction a monoamide of a dicarboxylate + H2O = a dicarboxylate + NH4(+). The enzyme catalyses 2-oxoglutaramate + H2O = 2-oxoglutarate + NH4(+). It catalyses the reaction 2-oxosuccinamate + H2O = oxaloacetate + NH4(+). Has omega-amidase activity. The role of omega-amidase is to remove potentially toxic intermediates by converting 2-oxoglutaramate and 2-oxosuccinamate to biologically useful 2-oxoglutarate and oxaloacetate, respectively. The polypeptide is Omega-amidase NIT2 (NIT2) (Homo sapiens (Human)).